A 445-amino-acid chain; its full sequence is Phosphoglucosamine mutase (445 aa).

Serine 102 acts as the Phosphoserine intermediate in catalysis. Mg(2+) contacts are provided by serine 102, aspartate 240, aspartate 242, and aspartate 244. Serine 102 is subject to Phosphoserine.

The protein belongs to the phosphohexose mutase family. Requires Mg(2+) as cofactor. Post-translationally, activated by phosphorylation.

It catalyses the reaction alpha-D-glucosamine 1-phosphate = D-glucosamine 6-phosphate. Catalyzes the conversion of glucosamine-6-phosphate to glucosamine-1-phosphate. The polypeptide is Phosphoglucosamine mutase (Mycobacterium ulcerans (strain Agy99)).